A 167-amino-acid chain; its full sequence is Large ribosomal subunit protein uL10 (167 aa).

The protein belongs to the universal ribosomal protein uL10 family. As to quaternary structure, part of the ribosomal stalk of the 50S ribosomal subunit. The N-terminus interacts with L11 and the large rRNA to form the base of the stalk. The C-terminus forms an elongated spine to which L12 dimers bind in a sequential fashion forming a multimeric L10(L12)X complex.

Its function is as follows. Forms part of the ribosomal stalk, playing a central role in the interaction of the ribosome with GTP-bound translation factors. The chain is Large ribosomal subunit protein uL10 from Tolumonas auensis (strain DSM 9187 / NBRC 110442 / TA 4).